Reading from the N-terminus, the 867-residue chain is Protein translocase subunit SecA (867 aa).

Residues Gln-85, 103 to 107, and Asp-491 each bind ATP; that span reads GEGKT.

The protein belongs to the SecA family. As to quaternary structure, monomer and homodimer. Part of the essential Sec protein translocation apparatus which comprises SecA, SecYEG and auxiliary proteins SecDF. Other proteins may also be involved.

The protein localises to the cell membrane. The protein resides in the cytoplasm. It catalyses the reaction ATP + H2O + cellular proteinSide 1 = ADP + phosphate + cellular proteinSide 2.. Part of the Sec protein translocase complex. Interacts with the SecYEG preprotein conducting channel. Has a central role in coupling the hydrolysis of ATP to the transfer of proteins into and across the cell membrane, serving as an ATP-driven molecular motor driving the stepwise translocation of polypeptide chains across the membrane. The sequence is that of Protein translocase subunit SecA from Mycoplasmopsis pulmonis (strain UAB CTIP) (Mycoplasma pulmonis).